A 689-amino-acid chain; its full sequence is UvrABC system protein C (689 aa).

Residues Met-1–Gly-19 show a composition bias toward polar residues. A disordered region spans residues Met-1 to Val-59. Acidic residues predominate over residues Glu-42–Val-59. The GIY-YIG domain occupies Thr-83–Val-161. Residues Arg-271 to Ile-306 form the UVR domain.

The protein belongs to the UvrC family. In terms of assembly, interacts with UvrB in an incision complex.

It is found in the cytoplasm. Its function is as follows. The UvrABC repair system catalyzes the recognition and processing of DNA lesions. UvrC both incises the 5' and 3' sides of the lesion. The N-terminal half is responsible for the 3' incision and the C-terminal half is responsible for the 5' incision. The polypeptide is UvrABC system protein C (Nitrobacter winogradskyi (strain ATCC 25391 / DSM 10237 / CIP 104748 / NCIMB 11846 / Nb-255)).